We begin with the raw amino-acid sequence, 592 residues long: Arginine--tRNA ligase (592 aa).

A 'HIGH' region motif is present at residues 129–139 (ANPTGPLHVGH).

This sequence belongs to the class-I aminoacyl-tRNA synthetase family. Monomer.

It localises to the cytoplasm. The enzyme catalyses tRNA(Arg) + L-arginine + ATP = L-arginyl-tRNA(Arg) + AMP + diphosphate. The sequence is that of Arginine--tRNA ligase from Dichelobacter nodosus (strain VCS1703A).